The following is a 78-amino-acid chain: uncharacterized protein (78 aa).

The next 2 helical transmembrane spans lie at 7–27 and 41–61; these read ICLVLTIIGAINWGLIGFFQF and LSRIIYGLVGIAGLINLGLLF.

Its subcellular location is the cell membrane. This is an uncharacterized protein from Bacillus subtilis (strain 168).